Consider the following 72-residue polypeptide: Heat shock factor-binding protein 1-like protein 1 (72 aa).

The stretch at 12–62 (DLLQNAAENLLLEVEEHFQALTTTLNLRMEEMGSRIEDLQRNVDDLMTQAG) forms a coiled coil.

It belongs to the HSBP1 family.

The sequence is that of Heat shock factor-binding protein 1-like protein 1 (Hsbp1l1) from Mus musculus (Mouse).